The following is a 38-amino-acid chain: MIPIKRSSRRWKKKGRMRWKWYKKRLRRLKRERKRARS.

The protein belongs to the eukaryotic ribosomal protein eS32 family. In terms of assembly, component of the small ribosomal subunit (SSU).

The sequence is that of Small ribosomal subunit protein eS32 (rpl41e) from Methanocaldococcus jannaschii (strain ATCC 43067 / DSM 2661 / JAL-1 / JCM 10045 / NBRC 100440) (Methanococcus jannaschii).